We begin with the raw amino-acid sequence, 839 residues long: Protein translocase subunit SecA (839 aa).

ATP-binding positions include glutamine 86, glycine 104 to threonine 108, and aspartate 493. Residues glycine 794 to glutamine 839 are disordered. A compositionally biased stretch (basic and acidic residues) spans aspartate 807–lysine 833.

This sequence belongs to the SecA family. As to quaternary structure, monomer and homodimer. Part of the essential Sec protein translocation apparatus which comprises SecA, SecYEG and auxiliary proteins SecDF. Other proteins may also be involved.

It is found in the cell membrane. Its subcellular location is the cytoplasm. It catalyses the reaction ATP + H2O + cellular proteinSide 1 = ADP + phosphate + cellular proteinSide 2.. In terms of biological role, part of the Sec protein translocase complex. Interacts with the SecYEG preprotein conducting channel. Has a central role in coupling the hydrolysis of ATP to the transfer of proteins into and across the cell membrane, serving as an ATP-driven molecular motor driving the stepwise translocation of polypeptide chains across the membrane. The sequence is that of Protein translocase subunit SecA from Brevibacillus brevis (strain 47 / JCM 6285 / NBRC 100599).